The primary structure comprises 462 residues: uncharacterized protein (462 aa).

The a divalent metal cation site is built by aspartate 12, histidine 14, aspartate 48, asparagine 81, histidine 179, and histidine 202. The stretch at glutamate 258 to lysine 291 forms a coiled coil.

This sequence belongs to the metallophosphoesterase superfamily. Requires a divalent metal cation as cofactor.

This is an uncharacterized protein from Bacillus subtilis (strain 168).